The chain runs to 1435 residues: Trafficking protein particle complex subunit 8 (1435 aa).

Phosphoserine occurs at positions 273, 279, and 309. The interval 301–321 is disordered; that stretch reads QLEQSSDPSNSIDGPDHLRSA. A compositionally biased stretch (polar residues) spans 302-312; that stretch reads LEQSSDPSNSI.

The protein belongs to the TRS85 family. As to quaternary structure, component of the multisubunit TRAPP (transport protein particle) complex, which includes TRAPPC2, TRAPPC2L, TRAPPC3, TRAPPC3L, TRAPPC4, TRAPPC5, TRAPPC8, TRAPPC9, TRAPPC10, TRAPPC11 and TRAPPC12. Interacts with TBC1D14. Interacts (via C-terminus) with TMEM131 (via C-terminus); the interaction is direct and is involved in collagen secretion.

The protein localises to the golgi apparatus. It localises to the cis-Golgi network. Functionally, plays a role in endoplasmic reticulum to Golgi apparatus trafficking at a very early stage. Maintains together with TBC1D14 the cycling pool of ATG9 required for initiation of autophagy. Involved in collagen secretion. The protein is Trafficking protein particle complex subunit 8 (TRAPPC8) of Homo sapiens (Human).